The following is a 345-amino-acid chain: Alpha-2-HS-glycoprotein (345 aa).

The first 18 residues, 1 to 18 (MKSLVLLLCFAQLWGCQS), serve as a signal peptide directing secretion. One can recognise a Cystatin fetuin-A-type 1 domain in the interval 19–133 (APQGTGLGFR…QFRVMHTQCH (115 aa)). Intrachain disulfides connect Cys-32–Cys-336, Cys-89–Cys-100, Cys-114–Cys-132, Cys-146–Cys-149, Cys-208–Cys-219, and Cys-230–Cys-247. Asn-99 is a glycosylation site (N-linked (GlcNAc...) asparagine). Ser-134 carries the phosphoserine modification. A Phosphothreonine modification is found at Thr-135. Ser-138 bears the Phosphoserine mark. Residues 144 to 250 (KLCPRCPLLT…EEVSVACKLF (107 aa)) enclose the Cystatin fetuin-A-type 2 domain. Asn-156 and Asn-176 each carry an N-linked (GlcNAc...) asparagine glycan. Residues Ser-305, Ser-309, Ser-312, and Ser-314 each carry the phosphoserine modification. Residues 312-334 (SASGETLHSPKVGQPGAAGPVSP) are disordered.

This sequence belongs to the fetuin family. Phosphorylated by FAM20C in the extracellular medium. As to expression, liver is the major site of synthesis, but fetuin is also expressed in limb buds and other extrahepatic tissues during development.

It is found in the secreted. Functionally, probably involved in differentiation. (Microbial infection) Facilitates invasion of hepatocytes by Plasmodium berghei sporozoites. The polypeptide is Alpha-2-HS-glycoprotein (Ahsg) (Mus musculus (Mouse)).